Consider the following 4981-residue polypeptide: MNLAANRAPGRRRLPLPSPSLCQLLRVWGLLSLLPGSARVQAAEQRQVFQVMEEQPPGTLVGTIPTRPGFTYRLSESHALFAINSSTGALYTTATIDRESLPSDVVNLVVLSSSPTYPTEVRVLVRDLNDNAPVFPDPSIVVTFKEDSGSGRQVILDTATDSDIGSNGVDHHSYRIVSGNEAGRFRLDITLNPSGEGAFLHLVSKGGLDREVTPQYQLLVEVEDKGEPKRRGYLQVNVTVQDINDNPPVFGSSHYQAGVPEDAVVGSSVLQVAAADADEGTNADIRYRLQDEGTPFQMDPETGLITVREPLDFEARRQYSLTVQATDRGVPSLTGRAEAFIQLLDVNDNDPVVKFRYFPATSRYASVDENAQVGTVVALLTVTDADSPAANGNISVQILGGNEQRHFEVQRSKVPNLSLIKVASALDRERIPSYNLTVSVSDNSGAPPTAEVQARSSVASLVIFVNDINDHPPVFEQQVYRVNLSEEVPPGSYVSGVSATDGDSGLNANLRYSIVSGNGLGWFHISEHSGLVTTSAAGGLDRELASQIVLNISARDQGVHPKVSYAQLVVTVLDVNDEKPVFSQPEGYEVSVVENAPTGTELLVLGATDRDLGDNGTVRFSLQEAENDQRLFRLDPVSGRLSTASSLDREEQAFYCLSILATDLGSPPQSSTAQVNVSLLDINDNSPVFYPVQYFAHIQENEPGGSYVTTVSATDPDMGPNGTVKYSISAGDRSRFQIHAKSGVISTKMALDREEKTAYQLQVVATDGGNLQSPNQAIVTVTVLDTQDNPPVFSQAAYSFVVFENVALGYHVGSVSATTMDLNANISYLITTGDQRGMFAMNPVTGQLTTASVIDREEQSFYQLKIVASGGAVTGDTVVNITVKDLNDNAPHFLQAVESINAVENWQAGHSIFQAKAVDPDEGVNGRVLYSLKQNPKNLFTINEQNGNISLLGALDVHAGSYQVEIVASDMGVPQLSSSILLTVYVHDVNDNPPVFDQISYEVTLSESEPVNSRFFKVQASDKDSGANGEIAYTITDGNNGDAFGIFPDGQLYIKSELDRELQDRYVLLVVASDRAVEPLSATVNVTVLLEDVNDNRPLFNSTNYTFYFEEEQRAGSFVGKVSAVDKDFGPNGEVRYAFEVTQPNFELHAVTGEITSTHKFDRESLMRRRGTAVFSFTVTAMDRGLPQPLKDQATVHVYMKDINDNAPKFLKDFYQATVSETATNLTQVLRVSASDVDEGSNGLIHYSILKGNEERQFAIDSFSGQVTLVGKLDYEATSAYSLLIQAVDSGAIPLNSTCTLSIDILDENDNTPSFPKSTLFVDVLENMRIGELVSSVTATDSDSGVNADLHYTITGSNNHGTFSISPNTGSIFLAKKLDFETQSLYKLNITAKDQGRPPRSSTMSVVIQVRDFNDNPPSFPPGDIFKSIVENIPLGTSVISVTAHDPDADINGQLSYAIIQQMPRGNHFSIDEVKGTIYTSAEIDREFANLFELTVKANDQAVPIETRRYALKNVTILVTDLNDNVPMFISQNALAADPSAMIGSVLTTIMAADPDEGANGEVEYEILNGDTDTFTVDRYSGDLRVASALVPSQLIYNLIVSATDLGPERRKSTTELTVILQGLDGPVFTQTKYITILKEGEPIGTNVISIEAASPRGSEAPVEYYIVSVRCEEKTVGRLFTIGRQTGVIQTAAILDREQGACLYLVDVYAIEKSSAFPRTQRAEVEITLQDINDNPPVFPTDTLDLTVEENIGDGSKIMQLTAMDADEGANALVTYALISGADDSFRIDPESGDLIATKRLDREHRSKYSLLVRADDGLQSSDMRINITISDVNDHTPRFSRPVYSFDIPEDTTPGSLVAAILATDDDSGVNGEISYVVEEDDGDGVFFLNLVTGVFNLTRALDYETQQYYILTVRAEDGGGQSTTIRAYFNILDVNDNPPVFSMSSYSTSLMENLPLGSTVLVFNVTDADDGVNSQLSYSIASGDSLGQFAVDKHGVLKTLKALDRESQSFYNLVIQVHDLPQPPTSRFTSTAQVSIILLDVNDNPPMFLSPKLTYIPENTPIDTVVFKAQATDPDSGPNSYIEYTLLNPSGNKFSIGTIDGEVHLTGELDREEVSNYSLTVVATDKGQPPLSSSTEVVVMVLDINDNNPVFAQAMYRVQIKENILTGTDIIQVSAADNDEGTNGQVRYGIVGGNTHQEFRIDSVTGAITVAKSLDRETTPAYTLTVQATDRGSSPRTDSCTVAITLLDMNDFVPVFELSPYSVNVPENLGTLPRAILQVVARDDDQGPNSQLSYVLLGGNEDNAFVLTASGELRVTQSLDREARDHFVLVVTAADAGSPALTGTGTINIIVDDINDNVPTFANNMYLTSIAEDARTGTDVLLVNASDADAAANAVISYSIIGGNSQFTINPSTGQIITSALLDRETKDNYTLVVVASDAGSPESLSSSTSVLVTITDVNDNPPRFQHHPYVTHIPSPTPPGSFVFAVTVTDADIGSNSELHYSLSGRNSEKFHIDPLRGAIMAAGPLSGASEVTFSVHVKDGGSFPKTDSTTVTVRFANKADFPKVRAKEQTFMFPENQPVGTLVTTITGSSLRGETLSYYIASGNLGDTFQIDPLTGQVSISQPLDFEKIQKYVVWIEARDGGFPPFSSYEKLDITVLDINDNAPTFEEDPFVSEILENLSPRKILTVSATDKDSGPNGQLDYEIVNGNQESSFTINHATGEIRSIRPLDREKISHYELTVKSSDKGSPSQSTSVKVIISILDENDNAPRFSQIFSAYVSENSPLGYTVTRVTTSDEDIGINAISRYSIVDTSLPFTINPNTGDIVISRPLNREDTDRYRIRVSAHDSGWTVSTDVTIFVTDINDNTPRFSRPSYYLDCPELPELGSRVTQVSATDPDEGSNGQVFYFIKSQSEYFRINATTGEIFNKQVLKYQNVSGFSNVNINRHSFIVTASDRGNPSLLSETTVTINTVDSNDNPPQFLQNKYFTPVTKNVKVGTKLIKVTAVDDKDFGLNSEVEYFVSDGNHLGKFKLDNDTGWISIASSLVSDLNQNFLIRVTAKDKGNPPLSSQAVVHITVTEENYHTPEFSQNHISATIPESHSIGSVVRTVSARDRDTAMNGLISYNIISGNEEGIFAINSSTGVVTLAKALDYEMSSKHEMTISATDGGWVARTGYCSLTVSVIDVNDNSPVFVPDEFFPTVMENAPSGTTVIHLNATDADSGANAVIAYTVQSSDSDLFVIDPNMGVITTQGFLDFETKQSYHLTVKAFNVPDEEKCSFATVDIQLKGTNEYVPRFVSKLYYFEVSEAASRGTAVGEVFASDRDMGADGEVHYLIFGNSRKKGFQINKMTGQIYVSGLLDREKEERVSLKVLAKNFGNIRGADIDEVTVNITVLDANDPPVFSLSTYRVQISEGVPIGTHVTFVSAFDSDSIPSWSRFSYFIGSGNENGAFSINPQTGQITVTSGLDRESLPVYNLTVLAVDSGTPSATGSASLVVTLEDINDNGPVLTVSEGEVLENKRPGTLVMTLQSTDPDLPPNQGPFNYYLLSTGPATNYFSLSTAGVLSTTREIDREQIADFYLSVVTRDSGAPQMSSTGTVHITVLDQNDNPSQSRTVEIFVNYYGNLFPGGTLGSVKPQDPDVLDSFHCSLTSGVTSLFSIPAGSCDLSSQPRSTDGTFDLTVVSSDGVHSTVTNNIRVFFAGFSNATIDNSILLRVGVPTVKDFLTNHYLHFLRIASSQLTGLGTAVQLYAAYEENNRTFLLAAVKRNNNQYVNPSGVATFFESIKEILLRQSGVKVESVDHDPCIHGPCQNGGSCLRRLAVGSALKIQESLPVIIVANEPLQPSQCKCVPGYAGSWCEVDIDECLPAPCHNGGTCHNLVGGFSCSCPEGFTGRACERDINECLPSPCKHGAVCQNFPGGFNCVCKTGYTGKMCESSVNYCECNPCFNGGSCQSGVESYYCHCPFGVFGKHCELNSYGFEELSYMEFPSLDPNNNYIYVKFATIKSHALLLYNYDNQTGERAEFLALEIAEERLRFSYNLGSGTYKLTTMKKVSDGQFHTVIARRAGMAASLTVDSCSENQEPGYCTVSNVAVSDDWTLDVQPNRVTVGGIRSLEPILQRRGHVESHDFVGCVMEFAVNGRPLEPSQALAAQGILDQCPRLEGTCARNPCQHGGTCVDFWSWQQCQCMEGLTGKYCEKSVTPDTALSLEGKGRLDYHMSQSEKREYLLTQSIRDTTLEPFGVNSLEVKFRTRSENGILIHIQESSNYTTVKIKNGKVHFTSDAGVAGKVERIIPEAYIADGHWHTFRISKNGSITVLSVDRIHNRDIVHPTQDFGGIEVLSMSLGGIPPNQAHRDTQTGFNGCIASVLYGGESLPFSGKHSLASISKTDPSVKIGCRGPNICASNPCWGDLLCINQWYAYKCVPPGDCASHPCQNGGSCEPGLLSGYTCSCPESHTGRTCETVVACLGVLCPQGKVCKAGSPGGHVCVQSQGPDEISLPLWAVPAIVGSCATALALLVLSLILCNQCRGKMPKNPKEEKKPKEKKKKGSENVAFDDPDNIPPYGDDLAVRKQPEGNPKPDIIERENPYLIFDETDIPHNSETIPSAPLASPEQEIEHYDIDNASSIAPSDADIIQHYKQFRSHTPKFSIQRHSPLGFARQSPMPLGASSLTYQPSSYGQGLRTSSLSHSACPTPNPLSRHSPAPFSKPSAFYRNSPARELHLPLRDGGTLEMHGDPCQPGMFNYATRLGRRSKSPQAMASHGSRPGSRLKQPIAQIPLESSPPVGLSIEEVERLNTPRPRNPSICSADHGRSSSEEDCRRPLSRTRNPADGIPAPESSSDSDSHDSFTCSEMEYDREKPVVYTSRMPKLSQVNESDADDEDNYGARLKPRRYHGRRAEGGPVGTPAAASGAADSTLKLGQQAGNFNWDNLLNWGPGFGHYVDVFKDLASLPEKAAGNEEGKSGAAKPAAKDGEAEQYV.

The N-terminal stretch at 1–42 (MNLAANRAPGRRRLPLPSPSLCQLLRVWGLLSLLPGSARVQA) is a signal peptide. Over 43 to 4505 (AEQRQVFQVM…PDEISLPLWA (4463 aa)) the chain is Extracellular. 34 Cadherin domains span residues 44-135 (EQRQ…APVF), 136-250 (PDPS…PPVF), 251-353 (GSSH…DPVV), 359-475 (PATS…PPVF), 476-582 (EQQV…KPVF), 584-689 (QPEG…SPVF), 690-793 (YPVQ…PPVF), 794-893 (SQAA…APHF), 894-996 (LQAV…PPVF), 997-1100 (DQIS…RPLF), 1101-1210 (NSTN…APKF), 1211-1315 (LKDF…TPSF), 1316-1420 (PKST…PPSF), 1421-1529 (PPGD…VPMF), 1529-1629 (FISQ…GPVF), 1630-1740 (TQTK…PPVF), 1741-1841 (PTDT…TPRF), 1842-1944 (SRPV…PPVF), 1945-2051 (SMSS…PPMF), 2051-2154 (FLSP…NPVF), 2155-2259 (AQAM…VPVF), 2260-2364 (ELSP…VPTF), 2365-2468 (ANNM…PPRF), 2469-2569 (QHHP…FPKV), 2570-2671 (RAKE…APTF), 2672-2775 (EEDP…APRF), 2775-2874 (FSQI…TPRF), 2875-2985 (SRPS…PPQF), 2986-3091 (LQNK…TPEF), 3092-3196 (SQNH…SPVF), 3197-3300 (VPDE…VPRF), 3301-3406 (VSKL…PPVF), 3407-3512 (SLST…GPVL), and 3511-3622 (VLTV…VEIF). 2 N-linked (GlcNAc...) asparagine glycosylation sites follow: Asn84 and Asn237. Asn393, Asn416, Asn435, Asn483, Asn551, Asn615, Asn676, Asn721, Asn825, Asn880, Asn948, Asn1085, Asn1101, Asn1104, Asn1225, Asn1296, Asn1389, and Asn1514 each carry an N-linked (GlcNAc...) asparagine glycan. 4 N-linked (GlcNAc...) asparagine glycosylation sites follow: Asn1828, Asn1899, Asn1967, and Asn2119. N-linked (GlcNAc...) asparagine glycans are attached at residues Asn2387 and Asn2432. N-linked (GlcNAc...) asparagine glycans are attached at residues Asn2923, Asn2939, Asn3038, Asn3142, Asn3219, Asn3394, and Asn3479. Residues Asn3708 and Asn3760 are each glycosylated (N-linked (GlcNAc...) asparagine). In terms of domain architecture, EGF-like 1 spans 3804–3862 (DHDPCIHGPCQNGGSCLRRLAVGSALKIQESLPVIIVANEPLQPSQCKCVPGYAGSWCE). 12 disulfides stabilise this stretch: Cys3808/Cys3819, Cys3813/Cys3850, Cys3852/Cys3861, Cys3868/Cys3879, Cys3873/Cys3888, Cys3890/Cys3899, Cys3906/Cys3917, Cys3911/Cys3926, Cys3928/Cys3937, Cys3944/Cys3955, Cys3949/Cys3964, and Cys3966/Cys3975. The EGF-like 2; calcium-binding domain occupies 3864–3900 (DIDECLPAPCHNGGTCHNLVGGFSCSCPEGFTGRACE). The 37-residue stretch at 3902 to 3938 (DINECLPSPCKHGAVCQNFPGGFNCVCKTGYTGKMCE) folds into the EGF-like 3; calcium-binding domain. Residues 3940-3976 (SVNYCECNPCFNGGSCQSGVESYYCHCPFGVFGKHCE) enclose the EGF-like 4 domain. The region spanning 3977–4161 (LNSYGFEELS…LAAQGILDQC (185 aa)) is the Laminin G-like 1 domain. The N-linked (GlcNAc...) asparagine glycan is linked to Asn4019. Intrachain disulfides connect Cys4135–Cys4161, Cys4168–Cys4179, Cys4173–Cys4188, and Cys4190–Cys4199. Positions 4164-4200 (LEGTCARNPCQHGGTCVDFWSWQQCQCMEGLTGKYCE) constitute an EGF-like 5 domain. Residues 4219-4399 (YHMSQSEKRE…KTDPSVKIGC (181 aa)) form the Laminin G-like 2 domain. Asn4269 and Asn4314 each carry an N-linked (GlcNAc...) asparagine glycan. 4 disulfide bridges follow: Cys4366/Cys4399, Cys4431/Cys4442, Cys4436/Cys4452, and Cys4454/Cys4463. The region spanning 4427–4464 (PPGDCASHPCQNGGSCEPGLLSGYTCSCPESHTGRTCE) is the EGF-like 6 domain. The chain crosses the membrane as a helical span at residues 4506–4526 (VPAIVGSCATALALLVLSLIL). Residues 4527 to 4981 (CNQCRGKMPK…AKDGEAEQYV (455 aa)) are Cytoplasmic-facing. 5 disordered regions span residues 4535–4585 (PKNP…PDII), 4677–4713 (PSSYGQGLRTSSLSHSACPTPNPLSRHSPAPFSKPSA), 4753–4773 (RRSKSPQAMASHGSRPGSRLK), 4796–4911 (RLNT…PAAA), and 4957–4981 (AAGNEEGKSGAAKPAAKDGEAEQYV). Over residues 4677–4701 (PSSYGQGLRTSSLSHSACPTPNPLS) the composition is skewed to polar residues. Residues 4708 to 4797 (FSKPSAFYRN…GLSIEEVERL (90 aa)) form a necessary and sufficient for interaction with MPDZ region. A compositionally biased stretch (basic and acidic residues) spans 4811–4823 (DHGRSSSEEDCRR). Position 4878 is a phosphoserine (Ser4878). Positions 4971-4981 (AAKDGEAEQYV) are enriched in basic and acidic residues.

As to quaternary structure, heterophilic interaction with DCHS1; this interaction affects their respective protein levels. Interacts (via cytoplasmic domain) with MPDZ. Forms a complex with PALS1 and MPDZ. Widely expressed.

It is found in the membrane. Cadherins are cell-cell interaction molecules. FAT4 plays a role in the maintenance of planar cell polarity as well as in inhibition of YAP1-mediated neuroprogenitor cell proliferation and differentiation. This is Protocadherin Fat 4 (Fat4) from Mus musculus (Mouse).